Here is a 699-residue protein sequence, read N- to C-terminus: Polyribonucleotide nucleotidyltransferase (699 aa).

Residues aspartate 485 and aspartate 491 each contribute to the Mg(2+) site. Residues proline 552–isoleucine 611 enclose the KH domain. In terms of domain architecture, S1 motif spans glycine 621–lysine 689.

The protein belongs to the polyribonucleotide nucleotidyltransferase family. Component of the RNA degradosome, which is a multiprotein complex involved in RNA processing and mRNA degradation. Mg(2+) is required as a cofactor.

It is found in the cytoplasm. The enzyme catalyses RNA(n+1) + phosphate = RNA(n) + a ribonucleoside 5'-diphosphate. Functionally, involved in mRNA degradation. Catalyzes the phosphorolysis of single-stranded polyribonucleotides processively in the 3'- to 5'-direction. The chain is Polyribonucleotide nucleotidyltransferase from Shewanella sp. (strain MR-4).